The chain runs to 1157 residues: Endo-1,4-beta-xylanase A (1157 aa).

A signal peptide spans 1–33 (MMKNNVDRIVSIVTALIMIFGASLFSPPIRVFA). 2 CBM-cenC domains span residues 38–189 (INLV…VTTQ) and 195–343 (GNVI…VIGE). In terms of domain architecture, GH10 spans 352–675 (QNDIPDLYSV…KPAFWAVVDP (324 aa)). Residue glutamate 495 is the Proton donor of the active site. Residue aspartate 537 is part of the active site. Glutamate 600 functions as the Nucleophile in the catalytic mechanism. 2 consecutive SLH domains span residues 1051-1114 (KKGV…YSGE) and 1115-1157 (FSDV…EMTQ).

It belongs to the glycosyl hydrolase 10 (cellulase F) family.

It catalyses the reaction Endohydrolysis of (1-&gt;4)-beta-D-xylosidic linkages in xylans.. The protein operates within glycan degradation; xylan degradation. In terms of biological role, endo-acting enzyme that randomly cleaves the internal xylosidic linkages of the xylan backbone, yielding xylooligosaccharides of various lengths which are further hydrolyzed to xylose molecules by beta-xylosidase (EC 3.2.1.37). Requires at least three xylose residues for catalytic activity. Does not have activity against xylobiose. The sequence is that of Endo-1,4-beta-xylanase A (xynA) from Thermoanaerobacterium saccharolyticum.